The chain runs to 359 residues: Guanine nucleotide-binding protein subunit alpha-11 (359 aa).

S-palmitoyl cysteine attachment occurs at residues Cys9 and Cys10. The G-alpha domain occupies 38–359 (RELKLLLLGT…QHNLKEYNLV (322 aa)). A G1 motif region spans residues 41 to 54 (KLLLLGTGESGKST). GTP-binding positions include 46–53 (GTGESGKS) and 180–183 (LRVR). Position 53 (Ser53) interacts with Mg(2+). Residues 178 to 186 (DVLRVRVPT) form a G2 motif region. Position 186 (Thr186) interacts with Mg(2+). The G3 motif stretch occupies residues 201–210 (FRMVDVGGQR). The G4 motif stretch occupies residues 270–277 (ILFLNKKD). Residues 274-277 (NKKD) and Ala331 each bind GTP. Positions 329-334 (TCATDT) are G5 motif.

It belongs to the G-alpha family. G(q) subfamily. G proteins are composed of 3 units; alpha, beta and gamma. The alpha chain contains the guanine nucleotide binding site.

The protein localises to the cell membrane. It localises to the cytoplasm. The catalysed reaction is GTP + H2O = GDP + phosphate + H(+). Guanine nucleotide-binding proteins (G proteins) function as transducers downstream of G protein-coupled receptors (GPCRs) in numerous signaling cascades. The alpha chain contains the guanine nucleotide binding site and alternates between an active, GTP-bound state and an inactive, GDP-bound state. Signaling by an activated GPCR promotes GDP release and GTP binding. The alpha subunit has a low GTPase activity that converts bound GTP to GDP, thereby terminating the signal. Both GDP release and GTP hydrolysis are modulated by numerous regulatory proteins. Signaling is mediated via phospholipase C-beta-dependent inositol lipid hydrolysis for signal propagation: activates phospholipase C-beta: following GPCR activation, GNA11 activates PLC-beta (PLCB1, PLCB2, PLCB3 or PLCB4), leading to production of diacylglycerol (DAG) and inositol 1,4,5-trisphosphate (IP3). This chain is Guanine nucleotide-binding protein subunit alpha-11 (gna11), found in Xenopus laevis (African clawed frog).